Consider the following 150-residue polypeptide: Ribosome maturation factor RimP (150 aa).

This sequence belongs to the RimP family.

It is found in the cytoplasm. Functionally, required for maturation of 30S ribosomal subunits. The polypeptide is Ribosome maturation factor RimP (Klebsiella pneumoniae (strain 342)).